A 135-amino-acid chain; its full sequence is Small ribosomal subunit protein uS12 (135 aa).

Residues 1 to 20 are disordered; that stretch reads MPTINQLVRKGRHSKVTKSK. Residues 9–18 show a composition bias toward basic residues; sequence RKGRHSKVTK.

It belongs to the universal ribosomal protein uS12 family. In terms of assembly, part of the 30S ribosomal subunit. Contacts proteins S8 and S17. May interact with IF1 in the 30S initiation complex.

With S4 and S5 plays an important role in translational accuracy. In terms of biological role, interacts with and stabilizes bases of the 16S rRNA that are involved in tRNA selection in the A site and with the mRNA backbone. Located at the interface of the 30S and 50S subunits, it traverses the body of the 30S subunit contacting proteins on the other side and probably holding the rRNA structure together. The combined cluster of proteins S8, S12 and S17 appears to hold together the shoulder and platform of the 30S subunit. In Lactobacillus acidophilus (strain ATCC 700396 / NCK56 / N2 / NCFM), this protein is Small ribosomal subunit protein uS12.